Here is a 347-residue protein sequence, read N- to C-terminus: UPF0324 membrane protein Atu0671 (347 aa).

The next 10 helical transmembrane spans lie at 15–37 (LRWL…AAIL), 50–72 (WLGD…SLPV), 105–127 (AGGL…SYAA), 140–162 (LIAC…AIGA), 172–194 (AFTA…LLGL), 201–223 (IFAG…LGAV), 233–250 (LIRV…SVIH), 263–282 (MVPW…SFGL), 287–309 (LLSP…LGLS), and 322–344 (VIIA…ILLT).

The protein belongs to the UPF0324 family.

It localises to the cell membrane. The sequence is that of UPF0324 membrane protein Atu0671 from Agrobacterium fabrum (strain C58 / ATCC 33970) (Agrobacterium tumefaciens (strain C58)).